A 38-amino-acid chain; its full sequence is Photosystem I reaction center subunit IX (38 aa).

Residues 4-24 (FLTTAPVVAAIWFTATAGILI) traverse the membrane as a helical segment.

The protein belongs to the PsaJ family.

It localises to the cellular thylakoid membrane. Functionally, may help in the organization of the PsaE and PsaF subunits. The polypeptide is Photosystem I reaction center subunit IX (Synechococcus sp. (strain CC9902)).